We begin with the raw amino-acid sequence, 354 residues long: Glycerol-3-phosphate dehydrogenase [NAD(P)+] (354 aa).

Positions 27, 28, 48, and 121 each coordinate NADPH. Residues K121 and G149 each contribute to the sn-glycerol 3-phosphate site. A153 is a binding site for NADPH. 5 residues coordinate sn-glycerol 3-phosphate: K204, D257, S267, R268, and N269. K204 (proton acceptor) is an active-site residue. Residue R268 participates in NADPH binding. NADPH-binding residues include V292 and E294.

This sequence belongs to the NAD-dependent glycerol-3-phosphate dehydrogenase family.

The protein resides in the cytoplasm. The enzyme catalyses sn-glycerol 3-phosphate + NAD(+) = dihydroxyacetone phosphate + NADH + H(+). The catalysed reaction is sn-glycerol 3-phosphate + NADP(+) = dihydroxyacetone phosphate + NADPH + H(+). Its pathway is membrane lipid metabolism; glycerophospholipid metabolism. In terms of biological role, catalyzes the reduction of the glycolytic intermediate dihydroxyacetone phosphate (DHAP) to sn-glycerol 3-phosphate (G3P), the key precursor for phospholipid synthesis. The polypeptide is Glycerol-3-phosphate dehydrogenase [NAD(P)+] (Pseudomonas fluorescens (strain Pf0-1)).